The sequence spans 610 residues: Ecto-NOX disulfide-thiol exchanger 2 (610 aa).

An RRM domain is found at 128-207 (KTVFVGGLPE…GRLHVDFAQA (80 aa)). 2 coiled-coil regions span residues 293-328 (IQSA…LSGI) and 381-505 (RREE…KESC).

This sequence belongs to the ENOX family. Cu cation serves as cofactor. Glycosylated. As to expression, found in the sera of cancer patients with a wide variety of cancers including breast, prostate, lung and ovarian cancers, leukemias, and lymphomas. Not found in the serum of healthy volunteers or patients with disorders other than cancer. Probably shed into serum by cancer cells. Found on the cell borders of renal, kidney and ovarian carcinomas but not on the borders of surrounding non-cancerous stromal cells.

It localises to the cell membrane. The protein localises to the secreted. It is found in the extracellular space. With respect to regulation, inhibited by the antitumor sulfonylurea LY181984, the vabilloid capsaicin, and retinoids. In terms of biological role, may be involved in cell growth. Probably acts as a terminal oxidase of plasma electron transport from cytosolic NAD(P)H via hydroquinones to acceptors at the cell surface. Hydroquinone oxidase activity alternates with a protein disulfide-thiol interchange/oxidoreductase activity which may control physical membrane displacements associated with vesicle budding or cell enlargement. The activities oscillate with a period length of 22 minutes and play a role in control of the ultradian cellular biological clock. In Homo sapiens (Human), this protein is Ecto-NOX disulfide-thiol exchanger 2 (ENOX2).